We begin with the raw amino-acid sequence, 245 residues long: MTLYEPFLERAQQVLTRRLELAPYPIPVGFERKEALVRGEAVVTTSTAWQSPKLRQIRAAHVQGGGALQVLNFVISPRLEYDLPFFGADLVTLPGGHLIALDMQPLFRDDPAYQAKYTEPIVPLFEAHRAHLEWGGDFPEEARPFFSPAFLWTRPKETGTVETRVFAAFVDYLNAYLDFVERAEPVTHPEGLAAVERAQLRYLHYRAEKDPARGMFRRFYGPEWTEEYIHGFLFDLERRREAVHR.

Belongs to the HY2 family.

The catalysed reaction is (3Z)-phycoerythrobilin + oxidized 2[4Fe-4S]-[ferredoxin] = 15,16-dihydrobiliverdin + reduced 2[4Fe-4S]-[ferredoxin] + 2 H(+). Functionally, catalyzes the two-electron reduction of the C2 and C3(1) diene system of 15,16-dihydrobiliverdin. In Gloeobacter violaceus (strain ATCC 29082 / PCC 7421), this protein is Phycoerythrobilin:ferredoxin oxidoreductase (pebB).